The following is a 142-amino-acid chain: Interleukin-3 (142 aa).

Positions 1-18 (MSHLPILLLLLLVSPGLQ) are cleaved as a signal peptide. N-linked (GlcNAc...) asparagine glycosylation is present at Asn33. Cys34 and Cys102 are disulfide-bonded.

It belongs to the IL-3 family. Monomer. In terms of tissue distribution, activated T-cells, mast cells, natural killer cells.

It localises to the secreted. Functionally, granulocyte/macrophage colony-stimulating factors are cytokines that act in hematopoiesis by controlling the production, differentiation, and function of 2 related white cell populations of the blood, the granulocytes and the monocytes-macrophages. In terms of biological role, this CSF induces granulocytes, macrophages, mast cells, stem cells, erythroid cells, eosinophils and megakaryocytes. In Callithrix jacchus (White-tufted-ear marmoset), this protein is Interleukin-3 (IL3).